The following is a 324-amino-acid chain: NAD kinase (324 aa).

Residue aspartate 89 is the Proton acceptor of the active site. Residues 89 to 90, arginine 94, 163 to 164, aspartate 193, and 204 to 209 contribute to the NAD(+) site; these read DG, NE, and TAYAFS.

The protein belongs to the NAD kinase family. Requires a divalent metal cation as cofactor.

It localises to the cytoplasm. It catalyses the reaction NAD(+) + ATP = ADP + NADP(+) + H(+). Its function is as follows. Involved in the regulation of the intracellular balance of NAD and NADP, and is a key enzyme in the biosynthesis of NADP. Catalyzes specifically the phosphorylation on 2'-hydroxyl of the adenosine moiety of NAD to yield NADP. This is NAD kinase from Nocardia farcinica (strain IFM 10152).